The sequence spans 466 residues: Ribulose bisphosphate carboxylase large chain (466 aa).

Lys4 is subject to N6,N6,N6-trimethyllysine. Positions 113 and 163 each coordinate substrate. The Proton acceptor role is filled by Lys165. Residue Lys167 coordinates substrate. Residues Lys191, Asp193, and Glu194 each coordinate Mg(2+). Lys191 bears the N6-carboxylysine mark. Catalysis depends on His284, which acts as the Proton acceptor. Residues Arg285, His317, and Ser369 each contribute to the substrate site.

This sequence belongs to the RuBisCO large chain family. Type I subfamily. As to quaternary structure, heterohexadecamer of 8 large chains and 8 small chains; disulfide-linked. The disulfide link is formed within the large subunit homodimers. The cofactor is Mg(2+). In terms of processing, the disulfide bond which can form in the large chain dimeric partners within the hexadecamer appears to be associated with oxidative stress and protein turnover.

It localises to the plastid. The protein localises to the chloroplast. The catalysed reaction is 2 (2R)-3-phosphoglycerate + 2 H(+) = D-ribulose 1,5-bisphosphate + CO2 + H2O. It carries out the reaction D-ribulose 1,5-bisphosphate + O2 = 2-phosphoglycolate + (2R)-3-phosphoglycerate + 2 H(+). RuBisCO catalyzes two reactions: the carboxylation of D-ribulose 1,5-bisphosphate, the primary event in carbon dioxide fixation, as well as the oxidative fragmentation of the pentose substrate in the photorespiration process. Both reactions occur simultaneously and in competition at the same active site. The sequence is that of Ribulose bisphosphate carboxylase large chain from Drimys winteri (Winter's bark).